The following is a 1043-amino-acid chain: Ras guanine nucleotide exchange factor S (1043 aa).

Residues 109–142 are a coiled coil; that stretch reads IETLQTQRRQSTLNIQALQINNELQQQLQQQQQL. Composition is skewed to low complexity over residues 135–145, 245–258, 266–281, and 293–307; these read QLQQQQQLPPI, LSPL…GLSS, SKNQ…NSSS, and NNNN…SNSS. Disordered regions lie at residues 135 to 160 and 245 to 316; these read QLQQ…TSTI and LSPL…HQSQ. The stretch at 404–434 forms a coiled coil; the sequence is LAVSLQNVEGLQNIAENLEDETLNLLDLVNE. Residues 645–768 form the N-terminal Ras-GEF domain; that stretch reads KDGSILKVTL…LLRGLLDKMI (124 aa). The Ras-GEF domain maps to 803 to 1043; sequence SAQSIAQQLT…YDLSIALEPK (241 aa).

Functionally, promotes the exchange of Ras-bound GDP by GTP. This is Ras guanine nucleotide exchange factor S (gefS) from Dictyostelium discoideum (Social amoeba).